Consider the following 270-residue polypeptide: Fluoride-specific ion channel FluC 2 (270 aa).

Transmembrane regions (helical) follow at residues 4–24 (IIIL…FIML), 35–55 (LDIL…TALY), 67–87 (IIGT…YGSV), and 96–116 (AFLI…VAVL). Residues G74 and S77 each coordinate Na(+).

The protein belongs to the fluoride channel Fluc/FEX (TC 1.A.43) family.

Its subcellular location is the cell inner membrane. It carries out the reaction fluoride(in) = fluoride(out). Na(+) is not transported, but it plays an essential structural role and its presence is essential for fluoride channel function. Functionally, fluoride-specific ion channel. Important for reducing fluoride concentration in the cell, thus reducing its toxicity. The sequence is that of Fluoride-specific ion channel FluC 2 from Brucella melitensis biotype 1 (strain ATCC 23456 / CCUG 17765 / NCTC 10094 / 16M).